The chain runs to 708 residues: Glycine--tRNA ligase beta subunit (708 aa).

It belongs to the class-II aminoacyl-tRNA synthetase family. In terms of assembly, tetramer of two alpha and two beta subunits.

The protein localises to the cytoplasm. It catalyses the reaction tRNA(Gly) + glycine + ATP = glycyl-tRNA(Gly) + AMP + diphosphate. The chain is Glycine--tRNA ligase beta subunit from Methylobacillus flagellatus (strain ATCC 51484 / DSM 6875 / VKM B-1610 / KT).